The following is a 572-amino-acid chain: Arginine--tRNA ligase (572 aa).

Positions Ala-127–His-137 match the 'HIGH' region motif.

It belongs to the class-I aminoacyl-tRNA synthetase family. In terms of assembly, monomer.

It is found in the cytoplasm. The enzyme catalyses tRNA(Arg) + L-arginine + ATP = L-arginyl-tRNA(Arg) + AMP + diphosphate. The polypeptide is Arginine--tRNA ligase (Vesicomyosocius okutanii subsp. Calyptogena okutanii (strain HA)).